The sequence spans 450 residues: Chromosomal replication initiator protein DnaA (450 aa).

The domain I, interacts with DnaA modulators stretch occupies residues 1-84 (MTENEQIFWN…AVDYVYEDNL (84 aa)). A domain II region spans residues 84–109 (LMIEQQHQGQQGYTEQAFQQLPAVQS). The interval 110 to 328 (DLNPKYSFDN…GALKDISLVA (219 aa)) is domain III, AAA+ region. ATP-binding residues include Gly154, Gly156, Lys157, and Thr158. The tract at residues 329–450 (NFKQIDTITV…EIETIKNKIK (122 aa)) is domain IV, binds dsDNA.

Belongs to the DnaA family. In terms of assembly, oligomerizes as a right-handed, spiral filament on DNA at oriC.

The protein resides in the cytoplasm. In terms of biological role, plays an essential role in the initiation and regulation of chromosomal replication. ATP-DnaA binds to the origin of replication (oriC) to initiate formation of the DNA replication initiation complex once per cell cycle. Binds the DnaA box (a 9 base pair repeat at the origin) and separates the double-stranded (ds)DNA. Forms a right-handed helical filament on oriC DNA; dsDNA binds to the exterior of the filament while single-stranded (ss)DNA is stabiized in the filament's interior. The ATP-DnaA-oriC complex binds and stabilizes one strand of the AT-rich DNA unwinding element (DUE), permitting loading of DNA polymerase. After initiation quickly degrades to an ADP-DnaA complex that is not apt for DNA replication. Binds acidic phospholipids. This is Chromosomal replication initiator protein DnaA from Streptococcus equi subsp. zooepidemicus (strain H70).